The chain runs to 252 residues: Adenosylcobinamide-GDP ribazoletransferase (252 aa).

The next 7 helical transmembrane spans lie at 4-24 (LFKGLMMSLSMFTIIPMPYVE), 38-58 (PIIGLIVGCVWFLGYKLINYL), 60-80 (ISIVLKSALIMIIPFIITGML), 113-133 (FSVISVIILFFIQFGAVHSFL), 141-161 (ILMFLPIISRNIVAYFFITII), 190-210 (LVCILFGSILGYIGIAILLIV), and 232-252 (VAGFSLVVGEIVGLFSACLFT).

The protein belongs to the CobS family. The cofactor is Mg(2+).

It is found in the cell membrane. The enzyme catalyses alpha-ribazole + adenosylcob(III)inamide-GDP = adenosylcob(III)alamin + GMP + H(+). It catalyses the reaction alpha-ribazole 5'-phosphate + adenosylcob(III)inamide-GDP = adenosylcob(III)alamin 5'-phosphate + GMP + H(+). It participates in cofactor biosynthesis; adenosylcobalamin biosynthesis; adenosylcobalamin from cob(II)yrinate a,c-diamide: step 7/7. In terms of biological role, joins adenosylcobinamide-GDP and alpha-ribazole to generate adenosylcobalamin (Ado-cobalamin). Also synthesizes adenosylcobalamin 5'-phosphate from adenosylcobinamide-GDP and alpha-ribazole 5'-phosphate. This Clostridium botulinum (strain Alaska E43 / Type E3) protein is Adenosylcobinamide-GDP ribazoletransferase.